The sequence spans 150 residues: Globin (150 aa).

Residues 11–150 form the Globin domain; it reads PLSAAEKTKI…MICILLRSAY (140 aa). Positions 74 and 106 each coordinate heme b.

The protein belongs to the globin family. Monomer.

This is Globin from Lampetra fluviatilis (European river lamprey).